The chain runs to 168 residues: Small ribosomal subunit protein uS9 (168 aa).

A compositionally biased stretch (low complexity) spans Met1–Ala11. The disordered stretch occupies residues Met1–Arg36.

This sequence belongs to the universal ribosomal protein uS9 family.

This Pseudarthrobacter chlorophenolicus (strain ATCC 700700 / DSM 12829 / CIP 107037 / JCM 12360 / KCTC 9906 / NCIMB 13794 / A6) (Arthrobacter chlorophenolicus) protein is Small ribosomal subunit protein uS9.